A 433-amino-acid polypeptide reads, in one-letter code: MDWVALDDTDSPAGGCTTHAAVLLRAELAEAGAEPVGRPLLVRLNPNVPFKTRGNAAVALPVEAPWSVDIEAVVLRALKKVVRKGYPETRPGLVVCEGEPPRVCESVYEEAVRRILNPGRVKESVDDDVNVVLEGRGIVGAVAALGFARVRKDHEVTFEGIAYRAEKYWGTERRVEESSIREFDRRTFPVTFDNLDSRDGDVLITPNTPCPVLYGVRSVEPDVLEVAPDMIKTREPVVEYEIFESNQATDAHLVRVDRLADAEDYSNPVLDLTVVEEPRRIPGGHVVVRCEDEEGVRVDIAAFRPARPLTEVVAALHPGDEIRVAGALRPETPKHPRTVNVEKLRVLRLERVEEVRNPVCGRCRRSMKSAGRKKGFKCSCGERAPEDSKIGVEVPRELVEGVTYEAPPVARRHLSKPEYLVELGLLEPSPLSR.

It belongs to the TiaS family.

It localises to the cytoplasm. The enzyme catalyses cytidine(34) in tRNA(Ile2) + agmatine + ATP + H2O = 2-agmatinylcytidine(34) in tRNA(Ile2) + AMP + 2 phosphate + 2 H(+). Its function is as follows. ATP-dependent agmatine transferase that catalyzes the formation of 2-agmatinylcytidine (agm2C) at the wobble position (C34) of tRNA(Ile2), converting the codon specificity from AUG to AUA. The polypeptide is tRNA(Ile2) 2-agmatinylcytidine synthetase TiaS (Methanopyrus kandleri (strain AV19 / DSM 6324 / JCM 9639 / NBRC 100938)).